Reading from the N-terminus, the 659-residue chain is Zeaxanthin epoxidase, chloroplastic (659 aa).

Residues 1-50 (MALLSATAPAKTRFSLFSHEEAQHPHPHALSACCGGGASGKRQRARARVA) constitute a chloroplast transit peptide. Residues 79-107 (RVLV…TVFE) and 357-370 (TFNW…LLGD) each bind FAD. An FHA domain is found at 553–607 (LSIGSRSDPSNSTASLALPLPQISENHATITCKNKAFYVTDNGSEHGTWITDNEG).

FAD serves as cofactor. Expressed in young microspores.

The protein resides in the plastid. It is found in the chloroplast membrane. Its subcellular location is the chloroplast thylakoid membrane. The catalysed reaction is all-trans-zeaxanthin + 4 reduced [2Fe-2S]-[ferredoxin] + 2 O2 + 4 H(+) = all-trans-violaxanthin + 4 oxidized [2Fe-2S]-[ferredoxin] + 2 H2O. It functions in the pathway plant hormone biosynthesis; abscisate biosynthesis. Its function is as follows. Zeaxanthin epoxidase that plays an important role in the xanthophyll cycle and abscisic acid (ABA) biosynthesis. Converts zeaxanthin into antheraxanthin and subsequently violaxanthin. Required for resistance to osmotic and drought stresses, seed development and dormancy. This Oryza sativa subsp. japonica (Rice) protein is Zeaxanthin epoxidase, chloroplastic (ZEP).